We begin with the raw amino-acid sequence, 534 residues long: Glycerol kinase 5 (534 aa).

The ATP site is built by S33 and T34. Glycerol-binding residues include R103, D280, and Q281. Residues T302, G345, and G445 each contribute to the ATP site.

The protein belongs to the FGGY kinase family. Expressed predominantly in sebaceous glands.

Its subcellular location is the cytoplasm. The enzyme catalyses glycerol + ATP = sn-glycerol 3-phosphate + ADP + H(+). It participates in polyol metabolism; glycerol degradation via glycerol kinase pathway; sn-glycerol 3-phosphate from glycerol: step 1/1. In terms of biological role, skin-specific kinase that plays a key role in glycerol metabolism, catalyzing its phosphorylation to produce sn-glycerol 3-phosphate. Involved in skin-specific regulation of sterol regulatory element-binding protein (SREBP) processing and lipid biosynthesis. This chain is Glycerol kinase 5 (Gk5), found in Mus musculus (Mouse).